A 301-amino-acid polypeptide reads, in one-letter code: D-alanine--D-alanine ligase (301 aa).

The region spanning 99–294 (KSVLEANGIR…FSELIDMIIQ (196 aa)) is the ATP-grasp domain. Residue 126–181 (INELGYPVVVKPTHGGSSVATFIVKEEKEIENCVSEAFKWDSEVMIEKFIKGDEIT) coordinates ATP. Mg(2+) contacts are provided by aspartate 248, glutamate 261, and asparagine 263.

The protein belongs to the D-alanine--D-alanine ligase family. Requires Mg(2+) as cofactor. It depends on Mn(2+) as a cofactor.

The protein resides in the cytoplasm. It catalyses the reaction 2 D-alanine + ATP = D-alanyl-D-alanine + ADP + phosphate + H(+). Its pathway is cell wall biogenesis; peptidoglycan biosynthesis. In terms of biological role, cell wall formation. The sequence is that of D-alanine--D-alanine ligase from Clostridium beijerinckii (strain ATCC 51743 / NCIMB 8052) (Clostridium acetobutylicum).